The primary structure comprises 396 residues: Elongation factor Tu (396 aa).

The region spanning 10–206 (KPHCNIGTIG…AVDSYIPQPE (197 aa)) is the tr-type G domain. A G1 region spans residues 19-26 (GHVDHGKT). Residue 19–26 (GHVDHGKT) coordinates GTP. Mg(2+) is bound at residue Thr26. The tract at residues 60–64 (GITIS) is G2. The G3 stretch occupies residues 81–84 (DCPG). Residues 81–85 (DCPGH) and 136–139 (NKVD) contribute to the GTP site. The interval 136–139 (NKVD) is G4. A G5 region spans residues 174-176 (SAV).

This sequence belongs to the TRAFAC class translation factor GTPase superfamily. Classic translation factor GTPase family. EF-Tu/EF-1A subfamily. In terms of assembly, monomer.

It localises to the cytoplasm. It catalyses the reaction GTP + H2O = GDP + phosphate + H(+). Functionally, GTP hydrolase that promotes the GTP-dependent binding of aminoacyl-tRNA to the A-site of ribosomes during protein biosynthesis. The sequence is that of Elongation factor Tu from Rhizorhabdus wittichii (strain DSM 6014 / CCUG 31198 / JCM 15750 / NBRC 105917 / EY 4224 / RW1) (Sphingomonas wittichii).